The sequence spans 473 residues: MRNSLSFQDEPIVALATPLGVGALAVVRMSGQGVFDIARKVFHKQGAPDFHLASSKGFQAHFGTIHDAQGVVDEVIALVFRSPRSFTMEDMVEFSCHGGPVVVQHLLKALIDAGCRLAEPGEFTRRAFLNGRIDLLQAEAIGEMIHARSESAFRTAVTQMQGRLSRQLEEMREKLLHSCALLELELDFSEEDVEFQNREELREDVQRLQGEINRLLDSYQHGRLLKEGVATVLVGSPNAGKSTLLNALLGEERSIVSHQPGTTRDYIEEPLLLGSTLFRLIDTAGLREGEEEVEHEGIRRSYRKIAEADVVLYLLDVSHPDYCNELSDITSLLEQASPNVQLLLVANKCDAITNPTERLAQLQAAMPQATVCGIAAKEGDGLEALKQQMSNMVAGLDKLHEASVLITSMRHYEALRRASDALENGACLVAEHAETELVAFELRSALEAVGEITGKVVNDEILSLIFERFCIGK.

(6S)-5-formyl-5,6,7,8-tetrahydrofolate contacts are provided by arginine 28, glutamate 93, and arginine 132. The TrmE-type G domain maps to 228-394 (GVATVLVGSP…LKQQMSNMVA (167 aa)). GTP contacts are provided by residues 238 to 243 (NAGKST), 257 to 263 (SHQPGTT), and 282 to 285 (DTAG). Positions 242 and 263 each coordinate Mg(2+). Lysine 473 contacts (6S)-5-formyl-5,6,7,8-tetrahydrofolate.

The protein belongs to the TRAFAC class TrmE-Era-EngA-EngB-Septin-like GTPase superfamily. TrmE GTPase family. As to quaternary structure, homodimer. Heterotetramer of two MnmE and two MnmG subunits. K(+) is required as a cofactor.

The protein localises to the cytoplasm. Exhibits a very high intrinsic GTPase hydrolysis rate. Involved in the addition of a carboxymethylaminomethyl (cmnm) group at the wobble position (U34) of certain tRNAs, forming tRNA-cmnm(5)s(2)U34. The sequence is that of tRNA modification GTPase MnmE from Chlorobium chlorochromatii (strain CaD3).